Here is a 431-residue protein sequence, read N- to C-terminus: Enolase (431 aa).

Residue glutamine 164 participates in (2R)-2-phosphoglycerate binding. The active-site Proton donor is the glutamate 206. Positions 243, 288, and 315 each coordinate Mg(2+). The (2R)-2-phosphoglycerate site is built by lysine 340, arginine 369, serine 370, and lysine 391. Lysine 340 serves as the catalytic Proton acceptor.

It belongs to the enolase family. It depends on Mg(2+) as a cofactor.

It localises to the cytoplasm. It is found in the secreted. The protein localises to the cell surface. The enzyme catalyses (2R)-2-phosphoglycerate = phosphoenolpyruvate + H2O. The protein operates within carbohydrate degradation; glycolysis; pyruvate from D-glyceraldehyde 3-phosphate: step 4/5. In terms of biological role, catalyzes the reversible conversion of 2-phosphoglycerate (2-PG) into phosphoenolpyruvate (PEP). It is essential for the degradation of carbohydrates via glycolysis. The protein is Enolase of Fervidobacterium nodosum (strain ATCC 35602 / DSM 5306 / Rt17-B1).